Reading from the N-terminus, the 182-residue chain is NADH-quinone oxidoreductase subunit B (182 aa).

The [4Fe-4S] cluster site is built by Cys-61, Cys-62, Cys-126, and Cys-156.

This sequence belongs to the complex I 20 kDa subunit family. In terms of assembly, NDH-1 is composed of 14 different subunits. Subunits NuoB, C, D, E, F, and G constitute the peripheral sector of the complex. The cofactor is [4Fe-4S] cluster.

It is found in the cell inner membrane. It catalyses the reaction a quinone + NADH + 5 H(+)(in) = a quinol + NAD(+) + 4 H(+)(out). Functionally, NDH-1 shuttles electrons from NADH, via FMN and iron-sulfur (Fe-S) centers, to quinones in the respiratory chain. The immediate electron acceptor for the enzyme in this species is believed to be ubiquinone. Couples the redox reaction to proton translocation (for every two electrons transferred, four hydrogen ions are translocated across the cytoplasmic membrane), and thus conserves the redox energy in a proton gradient. The polypeptide is NADH-quinone oxidoreductase subunit B (Xanthomonas oryzae pv. oryzae (strain PXO99A)).